Reading from the N-terminus, the 870-residue chain is Elastin (870 aa).

An N-terminal signal peptide occupies residues 1–27 (MAGLTAAVPQPGVLLILLLNLLHPAQP). A 4-hydroxyproline mark is found at proline 39 and proline 75. The residue at position 87 (proline 87) is a Hydroxyproline. Proline 105 bears the 4-hydroxyproline mark. 2 positions are modified to allysine: lysine 122 and lysine 126. Residues proline 207, proline 220, proline 223, and proline 244 each carry the 4-hydroxyproline modification. Allysine occurs at positions 290 and 309. Proline 338 bears the 4-hydroxyproline mark. Residues lysine 360 and lysine 363 each carry the allysine modification. Proline 375 is modified (hydroxyproline). 2 positions are modified to 4-hydroxyproline: proline 402 and proline 408. A hydroxyproline mark is found at proline 413 and proline 418. Residues lysine 434, lysine 438, lysine 441, lysine 485, and lysine 488 each carry the allysine modification. 4-hydroxyproline is present on residues proline 518 and proline 539. Allysine occurs at positions 554, 558, 615, 619, and 623. 4-hydroxyproline occurs at positions 637, 646, 662, and 670. Lysine 677 and lysine 680 each carry allysine. A 4-hydroxyproline modification is found at proline 715. Lysine 730, lysine 734, lysine 793, and lysine 796 each carry allysine. Position 842 is a 4-hydroxyproline (proline 842). Cysteine 860 and cysteine 865 form a disulfide bridge.

Belongs to the elastin family. As to quaternary structure, the polymeric elastin chains are cross-linked together into an extensible 3D network. Forms a ternary complex with BGN and MFAP2. Interacts with MFAP2 via divalent cations (calcium &gt; magnesium &gt; manganese) in a dose-dependent and saturating manner. Interacts with FBLN5 and FBN1. Forms a ternary complex with FBN1 and FBLN2 or FBLN5. Interacts with MFAP4 in a Ca (2+)-dependent manner; this interaction promotes ELN self-assembly. Interacts with EFEMP2 with moderate affinity. In terms of processing, elastin is formed through the cross-linking of its soluble precursor tropoelastin. Cross-linking is initiated through the action of lysyl oxidase on exposed lysines to form allysine. Subsequent spontaneous condensation reactions with other allysine or unmodified lysine residues result in various bi-, tri-, and tetrafunctional cross-links. The most abundant cross-links in mature elastin fibers are lysinonorleucine, allysine aldol, desmosine, and isodesmosine. Post-translationally, hydroxylation on proline residues within the sequence motif, GXPG, is most likely to be 4-hydroxy as this fits the requirement for 4-hydroxylation in vertebrates.

The protein resides in the secreted. It is found in the extracellular space. Its subcellular location is the extracellular matrix. Major structural protein of tissues such as aorta and nuchal ligament, which must expand rapidly and recover completely. Molecular determinant of the late arterial morphogenesis, stabilizing arterial structure by regulating proliferation and organization of vascular smooth muscle. The protein is Elastin (Eln) of Rattus norvegicus (Rat).